The primary structure comprises 734 residues: Ribosomal biogenesis protein LAS1L (734 aa).

Positions 204–255 (EGIEEEDQEEDKNIVVDDITEQKPEPQDDGKSTESDVKADGDSKGSEEVDSH) are disordered. A compositionally biased stretch (basic and acidic residues) spans 214-255 (DKNIVVDDITEQKPEPQDDGKSTESDVKADGDSKGSEEVDSH). Residues K215 and K226 each participate in a glycyl lysine isopeptide (Lys-Gly) (interchain with G-Cter in SUMO2) cross-link. Phosphoserine occurs at positions 441, 523, and 560. Residues 547–561 (GSEAKAQQQEEQGSV) are compositionally biased toward polar residues. Residues 547-619 (GSEAKAQQQE…PFSTGQESPT (73 aa)) are disordered. Over residues 563–575 (DVKEEEKEEKEVL) the composition is skewed to basic and acidic residues. The span at 578–605 (QVEEEEENDDQEEEEEDEDDEDDEEEDR) shows a compositional bias: acidic residues. S617 carries the post-translational modification Phosphoserine. The interval 636-655 (SAWQVSSEDVRWDTFPLGRM) is interaction with NOL9.

Belongs to the LAS1 family. In terms of assembly, component of some MLL1/MLL complex, at least composed of the core components KMT2A/MLL1, ASH2L, HCFC1/HCF1, WDR5 and RBBP5, as well as the facultative components BACC1, CHD8, E2F6, HSP70, INO80C, KANSL1, LAS1L, MAX, MCRS1, MGA, KAT8/MOF, PELP1, PHF20, PRP31, RING2, RUVB1/TIP49A, RUVB2/TIP49B, SENP3, TAF1, TAF4, TAF6, TAF7, TAF9 and TEX10. Component of the 5FMC complex, at least composed of PELP1, LAS1L, TEX10, WDR18 and SENP3; the complex interacts with methylated CHTOP and ZNF148. Interacts with NOL9 to form an ITS2 pre-rRNA endonuclease-kinase complex.

It localises to the nucleus. Its subcellular location is the nucleolus. The protein localises to the nucleoplasm. The protein resides in the cytoplasm. Its function is as follows. Required for the synthesis of the 60S ribosomal subunit and maturation of the 28S rRNA. Functions as a component of the Five Friends of Methylated CHTOP (5FMC) complex; the 5FMC complex is recruited to ZNF148 by methylated CHTOP, leading to desumoylation of ZNF148 and subsequent transactivation of ZNF148 target genes. Required for the efficient pre-rRNA processing at both ends of internal transcribed spacer 2 (ITS2). This Homo sapiens (Human) protein is Ribosomal biogenesis protein LAS1L (LAS1L).